A 468-amino-acid chain; its full sequence is bZIP transcription factor 14 (468 aa).

Disordered stretches follow at residues 55-149 (SRRK…EGRA) and 234-272 (SPQS…LGKD). Low complexity-rich tracts occupy residues 64 to 82 (SFVS…SSGS) and 95 to 106 (VTAASTESVSSS). The span at 112–128 (KKADTDDRVQRSRERNR) shows a compositional bias: basic and acidic residues. Residues 117-165 (DDRVQRSRERNRIHARKTRQRKKEQMQSLEGRATDLKHEQIRLKQIINE) form the bZIP 1 domain. The segment at 119–139 (RVQRSRERNRIHARKTRQRKK) is basic motif 1. Over residues 129–138 (IHARKTRQRK) the composition is skewed to basic residues. The segment at 145–159 (LEGRATDLKHEQIRL) is leucine-zipper 1. Positions 247 to 256 (ASTSDVSGDE) are enriched in polar residues. The 55-residue stretch at 279–333 (EELDQIRRERNRMHAKRTRDRKRIFTEEMAEMCRILEEENHLLRVHLGGLDSDFK) folds into the bZIP 2 domain. A basic motif 2 region spans residues 285 to 312 (RRERNRMHAKRTRDRKRIFTEEMAEMCR). Residues 313 to 320 (ILEEENHL) form a leucine-zipper 2 region. Residues 400–468 (ERQQREAERK…TTSLAAPVGW (69 aa)) are disordered. The segment covering 401-410 (RQQREAERKV) has biased composition (basic and acidic residues). Residues 417–426 (SAASDTSTSD) are compositionally biased toward low complexity.

Belongs to the bZIP family.

Its subcellular location is the nucleus. Its function is as follows. Transcriptional activator which binds to the C-box-like motif 5'-TGACGT-3' and A-box-like motif 5'-GTACGTA-3' of target promoters to positively regulate the expression of genes involved in the tricarboxylic acid (TCA) cycle in response to nitrogen starvation. May also regulate the TCA cycle during day-to-night transitions. This Phaeodactylum tricornutum (strain CCAP 1055/1) protein is bZIP transcription factor 14.